Here is a 224-residue protein sequence, read N- to C-terminus: Envelope glycoprotein L (224 aa).

Residues 1 to 16 form the signal peptide; the sequence is MGFVCLFGLVVMGAWG. The segment at 20–161 is interaction with gH; that stretch reads GSQATEYVLR…FDYSRTRRCV (142 aa). In terms of domain architecture, gL alphaherpesvirus-type spans 23–201; it reads ATEYVLRSVI…LATQPPVLAL (179 aa). Disulfide bonds link Cys44–Cys76 and Cys149–Cys160. Positions 168–224 are disordered; it reads PANTTSTWEPPVSSDDEASSQSKPLATQPPVLALSNAPPRRVSPTRGRRRHTRLRRN. Residues 213-224 are compositionally biased toward basic residues; it reads RGRRRHTRLRRN.

It belongs to the herpesviridae glycoprotein L (gL) family. Alphaherpesvirinae gL subfamily. Interacts with glycoprotein H (gH); this interaction is necessary for the correct processing and cell surface expression of gH. The heterodimer gH/gL seems to interact with gB trimers during fusion.

It localises to the virion membrane. Its subcellular location is the host cell membrane. It is found in the host Golgi apparatus. The protein localises to the host trans-Golgi network. The heterodimer glycoprotein H-glycoprotein L is required for the fusion of viral and plasma membranes leading to virus entry into the host cell. Acts as a functional inhibitor of gH and maintains gH in an inhibited form. Upon binding to host integrins, gL dissociates from gH leading to activation of the viral fusion glycoproteins gB and gH. This is Envelope glycoprotein L from Homo sapiens (Human).